Consider the following 237-residue polypeptide: NAD-dependent protein deacetylase (237 aa).

The 237-residue stretch at 1-237 folds into the Deacetylase sirtuin-type domain; sequence MFTTSLRQAQ…LVETNRALQK (237 aa). 7 residues coordinate NAD(+): Ala-18, Thr-22, Phe-29, Arg-30, Gln-95, Asp-98, and His-113. Nicotinamide is bound at residue Phe-29. Nicotinamide is bound at residue Asp-98. The Proton acceptor role is filled by His-113. Zn(2+) contacts are provided by Cys-121, Cys-124, Cys-140, and Cys-142. Residues Ser-180, Ser-181, Asn-205, and Ile-224 each coordinate NAD(+).

This sequence belongs to the sirtuin family. Class U subfamily. Requires Zn(2+) as cofactor.

Its subcellular location is the cytoplasm. The enzyme catalyses N(6)-acetyl-L-lysyl-[protein] + NAD(+) + H2O = 2''-O-acetyl-ADP-D-ribose + nicotinamide + L-lysyl-[protein]. Its function is as follows. NAD-dependent protein deacetylase which modulates the activities of several enzymes which are inactive in their acetylated form. This is NAD-dependent protein deacetylase from Shouchella clausii (strain KSM-K16) (Alkalihalobacillus clausii).